The primary structure comprises 1049 residues: FERM, ARHGEF and pleckstrin domain-containing protein 1 (1049 aa).

A disordered region spans residues 1–37 (MGEIEQKPTPASRLGAPENSGISTLERGQKPPPTPSG). Residues S20 and S23 each carry the phosphoserine modification. T24 bears the Phosphothreonine mark. The FERM domain occupies 40–320 (MTVKIQMLDD…EHHAFFRLFE (281 aa)). Phosphoserine occurs at positions 340, 373, 389, 403, 427, 433, and 437. The disordered stretch occupies residues 361-537 (FERKHSKIHS…TDDEEEGRRK (177 aa)). Composition is skewed to polar residues over residues 371-395 (TRSL…SASL) and 402-412 (ESPSAQSCQQA). The segment covering 435 to 448 (SGSKAADGTAAAAP) has biased composition (low complexity). 2 stretches are compositionally biased toward polar residues: residues 473–492 (STGS…NSQG) and 499–514 (VTLS…QASP). Phosphoserine is present on residues S513 and S517. One can recognise a DH domain in the interval 543–734 (KAYYIAKEVS…TEMVAQLHGT (192 aa)). In terms of domain architecture, PH 1 spans 763-860 (EFIRLGSLSK…WLEDIQMAID (98 aa)). S837, S876, and S882 each carry phosphoserine. Residues 866 to 908 (NGPTPELLASSPPDNKSPDEATAADQESEDDLSASRTSLERQA) form a disordered region. Phosphothreonine is present on T887. S893, S900, and S903 each carry phosphoserine. A PH 2 domain is found at 936–1033 (ENQLSGNLLR…WMEVIRSATS (98 aa)).

In terms of assembly, interacts with CADM1. Interacts with RAC1. Detected in forbrain (at protein level).

The protein resides in the cell membrane. It is found in the synapse. The protein localises to the synaptosome. Its subcellular location is the cytoplasm. It localises to the cytosol. The protein resides in the cell projection. It is found in the filopodium. The protein localises to the dendrite. Its subcellular location is the dendritic spine. Functionally, may play a role in semaphorin signaling. Functions as a guanine nucleotide exchange factor for RAC1. Plays a role in the assembly and disassembly of dendritic filopodia, the formation of dendritic spines, regulation of dendrite length and ultimately the formation of synapses. The protein is FERM, ARHGEF and pleckstrin domain-containing protein 1 (Farp1) of Rattus norvegicus (Rat).